The chain runs to 1182 residues: Phosphatidylinositol 3-kinase age-1 (1182 aa).

Positions 1-16 (MSMGRSPSTTFRSRTG) are enriched in polar residues. Positions 1-24 (MSMGRSPSTTFRSRTGSHGARDLI) are disordered. The 101-residue stretch at 74 to 174 (NEGVADIITM…FPMLFLYQPD (101 aa)) folds into the PI3K-ABD domain. Residues 266–358 (KRKAEINGVC…YRCPGFVVRR (93 aa)) form the PI3K-RBD domain. Positions 425–577 (LDANLMIRPV…SSYGGRVRMP (153 aa)) constitute a C2 PI3K-type domain. In terms of domain architecture, PIK helical spans 601 to 788 (DDYESCIRDP…SLLMEAYLRG (188 aa)). Residues 853 to 1168 (IIDKAIVLGS…IYEEAFNGSW (316 aa)) enclose the PI3K/PI4K catalytic domain. The G-loop stretch occupies residues 859 to 865 (VLGSAKR). Residues 1028-1036 (GIKDRHSDN) form a catalytic loop region. The activation loop stretch occupies residues 1047-1073 (HIDFGHILGHGKTKLGIQRDRQPFILT).

It belongs to the PI3/PI4-kinase family.

The catalysed reaction is a 1,2-diacyl-sn-glycero-3-phospho-(1D-myo-inositol) + ATP = a 1,2-diacyl-sn-glycero-3-phospho-(1D-myo-inositol-3-phosphate) + ADP + H(+). Functionally, phosphatidylinositol 3-kinase homolog that regulates longevity and diapause. Promotes cell survival during embryonic development by recruiting akt-1/2 to the plasma membrane through the production of PtdIns(3,4,5)P3. Could function in the development or neuroendocrine signaling of the dauer pathway. Mediates susceptibility to enteropathogenic E.coli infection. May negatively regulate AYI interneuron neurite outgrowth. Plays a role in aversive olfactory learning when an odor is associated with food deprivation. Regulates this process by promoting the nuclear relocalization of egl-4 in AWC olfactory neurons after odor conditioning. The protein is Phosphatidylinositol 3-kinase age-1 of Caenorhabditis elegans.